A 140-amino-acid chain; its full sequence is MGFWKFSPFLPLSILVLYQVGIIQAAPFRSALESLPDPAVLPEEESRLLLAALVKDYVQMKVRALEQEQETGGASLDSPRAKRCSNLSTCVLGTYTQDLNKFHTFPQTAIGVGAPGKKRVMARGLERDHGPHIGTSQDAY.

Positions 1–25 (MGFWKFSPFLPLSILVLYQVGIIQA) are cleaved as a signal peptide. Positions 26 to 81 (APFRSALESLPDPAVLPEEESRLLLAALVKDYVQMKVRALEQEQETGGASLDSPRA) are excised as a propeptide. Cys-84 and Cys-90 are disulfide-bonded. At Pro-115 the chain carries Proline amide. The propeptide occupies 120–140 (VMARGLERDHGPHIGTSQDAY).

It belongs to the calcitonin family.

It is found in the secreted. Its function is as follows. Calcitonin is a peptide hormone that causes a rapid but short-lived drop in the level of calcium and phosphate in blood by promoting the incorporation of those ions in the bones. Calcitonin function is mediated by the calcitonin receptor/CALCR and the CALCR-RAMP2 (AMYR2) receptor complex. This Equus caballus (Horse) protein is Calcitonin (CALCA).